The following is a 514-amino-acid chain: Membrane-bound lytic murein transglycosylase F (514 aa).

A signal peptide spans 1–30; that stretch reads MKKLKINYLFIGILTLLLAAALWPSIPWFG. The tract at residues 31 to 269 is non-LT domain; sequence KTENHIAAIQ…RIEEKYLGHG (239 aa). Positions 270–514 are LT domain; sequence DDFDYVDTRS…LFTPQKKEEK (245 aa). The active site involves glutamate 314.

The protein in the N-terminal section; belongs to the bacterial solute-binding protein 3 family. This sequence in the C-terminal section; belongs to the transglycosylase Slt family.

The protein resides in the cell outer membrane. It catalyses the reaction Exolytic cleavage of the (1-&gt;4)-beta-glycosidic linkage between N-acetylmuramic acid (MurNAc) and N-acetylglucosamine (GlcNAc) residues in peptidoglycan, from either the reducing or the non-reducing ends of the peptidoglycan chains, with concomitant formation of a 1,6-anhydrobond in the MurNAc residue.. Functionally, murein-degrading enzyme that degrades murein glycan strands and insoluble, high-molecular weight murein sacculi, with the concomitant formation of a 1,6-anhydromuramoyl product. Lytic transglycosylases (LTs) play an integral role in the metabolism of the peptidoglycan (PG) sacculus. Their lytic action creates space within the PG sacculus to allow for its expansion as well as for the insertion of various structures such as secretion systems and flagella. The sequence is that of Membrane-bound lytic murein transglycosylase F from Salmonella paratyphi A (strain ATCC 9150 / SARB42).